The sequence spans 344 residues: Protein RecA (344 aa).

65–72 (GPESSGKT) lines the ATP pocket.

Belongs to the RecA family.

The protein localises to the cytoplasm. In terms of biological role, can catalyze the hydrolysis of ATP in the presence of single-stranded DNA, the ATP-dependent uptake of single-stranded DNA by duplex DNA, and the ATP-dependent hybridization of homologous single-stranded DNAs. It interacts with LexA causing its activation and leading to its autocatalytic cleavage. In Xanthomonas oryzae pv. oryzae (strain PXO99A), this protein is Protein RecA.